Reading from the N-terminus, the 80-residue chain is DNA-binding protein S1FA2 (80 aa).

Residues 54-59 (PPRKKK) carry the Nuclear localization signal motif. A compositionally biased stretch (basic residues) spans 55–70 (PRKKKPVSKKKMKREK). A disordered region spans residues 55 to 80 (PRKKKPVSKKKMKREKLKQGVSAPGE).

It belongs to the S1FA transcription factor family.

The protein localises to the nucleus. Functionally, DNA-binding protein that specifically recognizes a negative element (S1F) within the RPS1 promoter. This Oryza sativa subsp. japonica (Rice) protein is DNA-binding protein S1FA2 (S1FA2).